Here is a 447-residue protein sequence, read N- to C-terminus: Tubulin beta-2 chain (447 aa).

GTP is bound by residues Q11, E69, S138, G142, T143, G144, N204, and N226. E69 lines the Mg(2+) pocket. The disordered stretch occupies residues 426 to 447 (QDAGVDEEEEEYEEEAPLEEEV). Residues 429–447 (GVDEEEEEYEEEAPLEEEV) show a composition bias toward acidic residues.

The protein belongs to the tubulin family. Dimer of alpha and beta chains. A typical microtubule is a hollow water-filled tube with an outer diameter of 25 nm and an inner diameter of 15 nM. Alpha-beta heterodimers associate head-to-tail to form protofilaments running lengthwise along the microtubule wall with the beta-tubulin subunit facing the microtubule plus end conferring a structural polarity. Microtubules usually have 13 protofilaments but different protofilament numbers can be found in some organisms and specialized cells. Mg(2+) is required as a cofactor.

The protein localises to the cytoplasm. It localises to the cytoskeleton. Tubulin is the major constituent of microtubules, a cylinder consisting of laterally associated linear protofilaments composed of alpha- and beta-tubulin heterodimers. Microtubules grow by the addition of GTP-tubulin dimers to the microtubule end, where a stabilizing cap forms. Below the cap, tubulin dimers are in GDP-bound state, owing to GTPase activity of alpha-tubulin. The chain is Tubulin beta-2 chain (TUB2) from Colletotrichum gloeosporioides (Anthracnose fungus).